The following is a 414-amino-acid chain: Probable mannose-1-phosphate guanyltransferase (414 aa).

The protein belongs to the transferase hexapeptide repeat family.

It is found in the cytoplasm. The protein resides in the nucleus. It catalyses the reaction alpha-D-mannose 1-phosphate + GTP + H(+) = GDP-alpha-D-mannose + diphosphate. It participates in nucleotide-sugar biosynthesis; GDP-alpha-D-mannose biosynthesis; GDP-alpha-D-mannose from alpha-D-mannose 1-phosphate (GTP route): step 1/1. Functionally, involved in cell wall synthesis where it is required for glycosylation. The protein is Probable mannose-1-phosphate guanyltransferase of Schizosaccharomyces pombe (strain 972 / ATCC 24843) (Fission yeast).